The sequence spans 501 residues: Cytochrome P450 76M5 (501 aa).

A helical transmembrane segment spans residues 5–25 (ELWVLAAALAVSLLYYLAALM). Cys-443 is a heme binding site.

This sequence belongs to the cytochrome P450 family. Heme serves as cofactor.

The protein resides in the membrane. It carries out the reaction ent-sandaracopimaradien-3beta-ol + reduced [NADPH--hemoprotein reductase] + O2 = oryzalexin E + oxidized [NADPH--hemoprotein reductase] + H2O + H(+). Its function is as follows. Enzyme of the diterpenoid metabolism involved in the biosynthesis of the oryzalexin class of phytoalexins. Hydroxylates ent-sandaracopimaradien. This is Cytochrome P450 76M5 from Oryza sativa subsp. japonica (Rice).